A 277-amino-acid polypeptide reads, in one-letter code: Putative phosphoenolpyruvate synthase regulatory protein (277 aa).

157-164 (GVSRCGKT) lines the ADP pocket.

The protein belongs to the pyruvate, phosphate/water dikinase regulatory protein family. PSRP subfamily.

The enzyme catalyses [pyruvate, water dikinase] + ADP = [pyruvate, water dikinase]-phosphate + AMP + H(+). It catalyses the reaction [pyruvate, water dikinase]-phosphate + phosphate + H(+) = [pyruvate, water dikinase] + diphosphate. Its function is as follows. Bifunctional serine/threonine kinase and phosphorylase involved in the regulation of the phosphoenolpyruvate synthase (PEPS) by catalyzing its phosphorylation/dephosphorylation. The sequence is that of Putative phosphoenolpyruvate synthase regulatory protein from Cronobacter sakazakii (strain ATCC BAA-894) (Enterobacter sakazakii).